The sequence spans 67 residues: Guanine nucleotide-binding protein G(I)/G(S)/G(O) subunit gamma-13 (67 aa).

Cysteine methyl ester is present on Cys64. A lipid anchor (S-farnesyl cysteine) is attached at Cys64. The propeptide at 65–67 (TIL) is removed in mature form.

The protein belongs to the G protein gamma family. G proteins are composed of 3 units, alpha, beta and gamma.

It is found in the cell membrane. Its function is as follows. Guanine nucleotide-binding proteins (G proteins) are involved as a modulator or transducer in various transmembrane signaling systems. The beta and gamma chains are required for the GTPase activity, for replacement of GDP by GTP, and for G protein-effector interaction. The protein is Guanine nucleotide-binding protein G(I)/G(S)/G(O) subunit gamma-13 (GNG13) of Homo sapiens (Human).